Here is a 303-residue protein sequence, read N- to C-terminus: Recombination-associated protein RdgC (303 aa).

This sequence belongs to the RdgC family.

It is found in the cytoplasm. The protein localises to the nucleoid. Its function is as follows. May be involved in recombination. The chain is Recombination-associated protein RdgC from Aeromonas hydrophila subsp. hydrophila (strain ATCC 7966 / DSM 30187 / BCRC 13018 / CCUG 14551 / JCM 1027 / KCTC 2358 / NCIMB 9240 / NCTC 8049).